The chain runs to 124 residues: Ribonuclease pancreatic (124 aa).

Basic and acidic residues predominate over residues 1 to 13 (KETAAAKFERQHM). The tract at residues 1–25 (KETAAAKFERQHMDSSTSSASSSNY) is disordered. Substrate is bound by residues lysine 7 and arginine 10. Histidine 12 serves as the catalytic Proton acceptor. Disulfide bonds link cysteine 26/cysteine 84, cysteine 40/cysteine 95, cysteine 58/cysteine 110, and cysteine 65/cysteine 72. Residues 41–45 (KPVNT), lysine 66, and arginine 85 each bind substrate. The active-site Proton donor is histidine 119.

Belongs to the pancreatic ribonuclease family. In terms of assembly, monomer. Interacts with and forms tight 1:1 complexes with RNH1. Dimerization of two such complexes may occur. Interaction with RNH1 inhibits this protein. As to expression, pancreas.

It localises to the secreted. It carries out the reaction an [RNA] containing cytidine + H2O = an [RNA]-3'-cytidine-3'-phosphate + a 5'-hydroxy-ribonucleotide-3'-[RNA].. It catalyses the reaction an [RNA] containing uridine + H2O = an [RNA]-3'-uridine-3'-phosphate + a 5'-hydroxy-ribonucleotide-3'-[RNA].. In terms of biological role, endonuclease that catalyzes the cleavage of RNA on the 3' side of pyrimidine nucleotides. Acts on single-stranded and double-stranded RNA. This Tragelaphus oryx (Eland) protein is Ribonuclease pancreatic (RNASE1).